Here is a 213-residue protein sequence, read N- to C-terminus: ATP synthase peripheral stalk subunit OSCP, mitochondrial (213 aa).

The transit peptide at 1–23 (MAAPAASGLSRQVRSFSTSVVRP) directs the protein to the mitochondrion. Positions 5-23 (AASGLSRQVRSFSTSVVRP) match the SIFI-degron motif. 4 positions are modified to N6-acetyllysine: lysine 54, lysine 60, lysine 70, and lysine 73. N6-succinyllysine is present on lysine 90. 3 positions are modified to N6-acetyllysine; alternate: lysine 100, lysine 158, and lysine 162. 3 positions are modified to N6-succinyllysine; alternate: lysine 100, lysine 158, and lysine 162. Residues lysine 172, lysine 176, and lysine 192 each carry the N6-acetyllysine modification. N6-succinyllysine is present on lysine 199.

Belongs to the ATPase delta chain family. As to quaternary structure, component of the ATP synthase complex composed at least of ATP5F1A/subunit alpha, ATP5F1B/subunit beta, ATP5MC1/subunit c (homooctomer), MT-ATP6/subunit a, MT-ATP8/subunit 8, ATP5ME/subunit e, ATP5MF/subunit f, ATP5MG/subunit g, ATP5MK/subunit k, ATP5MJ/subunit j, ATP5F1C/subunit gamma, ATP5F1D/subunit delta, ATP5F1E/subunit epsilon, ATP5PF/subunit F6, ATP5PB/subunit b, ATP5PD/subunit d, ATP5PO/subunit OSCP. ATP synthase complex consists of a soluble F(1) head domain (subunits alpha(3) and beta(3)) - the catalytic core - and a membrane F(0) domain - the membrane proton channel (subunits c, a, 8, e, f, g, k and j). These two domains are linked by a central stalk (subunits gamma, delta, and epsilon) rotating inside the F1 region and a stationary peripheral stalk (subunits F6, b, d, and OSCP). Post-translationally, acetylation of Lys-70 and Lys-158 is observed in liver mitochondria from fasted mice but not from fed mice. In terms of processing, acetylation at Lys-162 decreases ATP production. Deacetylated by SIRT3. In response to mitochondrial stress, the precursor protein is ubiquitinated by the SIFI complex in the cytoplasm before mitochondrial import, leading to its degradation. Within the SIFI complex, UBR4 initiates ubiquitin chain that are further elongated or branched by KCMF1.

The protein localises to the mitochondrion. It localises to the mitochondrion inner membrane. Its function is as follows. Subunit OSCP, of the mitochondrial membrane ATP synthase complex (F(1)F(0) ATP synthase or Complex V) that produces ATP from ADP in the presence of a proton gradient across the membrane which is generated by electron transport complexes of the respiratory chain. ATP synthase complex consist of a soluble F(1) head domain - the catalytic core - and a membrane F(1) domain - the membrane proton channel. These two domains are linked by a central stalk rotating inside the F(1) region and a stationary peripheral stalk. During catalysis, ATP synthesis in the catalytic domain of F(1) is coupled via a rotary mechanism of the central stalk subunits to proton translocation. In vivo, can only synthesize ATP although its ATP hydrolase activity can be activated artificially in vitro. Part of the complex F(0) domain. Part of the complex F(0) domain and the peripheric stalk, which acts as a stator to hold the catalytic alpha(3)beta(3) subcomplex and subunit a/ATP6 static relative to the rotary elements. This is ATP synthase peripheral stalk subunit OSCP, mitochondrial from Mus musculus (Mouse).